The chain runs to 150 residues: UPF0756 membrane protein PC1_1142 (150 aa).

The next 4 helical transmembrane spans lie at 1-21, 51-71, 82-102, and 127-147; these read MAYL…GIIS, YGLS…IASG, FLHW…WLGG, and ALFR…SLLI.

Belongs to the UPF0756 family.

It is found in the cell membrane. In Pectobacterium carotovorum subsp. carotovorum (strain PC1), this protein is UPF0756 membrane protein PC1_1142.